Here is an 890-residue protein sequence, read N- to C-terminus: Protein FAM171A1 (890 aa).

The signal sequence occupies residues 1–21 (MSRSATLLLCLLGCHVWKAVT). Over 22 to 303 (KTLREPGAGA…VTQDITTYHT (282 aa)) the chain is Extracellular. N-linked (GlcNAc...) asparagine glycans are attached at residues asparagine 159, asparagine 190, and asparagine 194. The helical transmembrane segment at 304-324 (VFLLAILGGMAFILLVLLCLL) threads the bilayer. Residues 325 to 890 (LYYCRRKCLK…ERPLMAFNIK (566 aa)) lie on the Cytoplasmic side of the membrane. Residues serine 358, serine 360, serine 371, serine 422, serine 443, and serine 525 each carry the phosphoserine modification. Disordered stretches follow at residues 730-759 (AGRN…RGDA) and 818-890 (EGSS…FNIK). Basic and acidic residues predominate over residues 747 to 757 (NEPKSARKGRG). Residues 822 to 833 (RRSGGQLPSLQE) show a composition bias toward polar residues. Phosphoserine occurs at positions 849 and 855. The span at 858–869 (EEEEDDDDDDQG) shows a compositional bias: acidic residues. Residues 870-883 (EDKKSPWQKREERP) show a composition bias toward basic and acidic residues.

It belongs to the FAM171 family. Interacts with ADAM10, NSG1 and OAZ1. In terms of tissue distribution, expressed in heart, brain, liver, skeletal muscle, kidney and pancreas. In brain, expressed by glia, pyramidal neurons and astrocytes (at protein level). Highly expressed in placental trophoblasts.

It localises to the cell membrane. Functionally, involved in the regulation of the cytoskeletal dynamics, plays a role in actin stress fiber formation. The sequence is that of Protein FAM171A1 from Homo sapiens (Human).